Reading from the N-terminus, the 340-residue chain is Fructoselysine 6-phosphate deglycase (340 aa).

SIS domains lie at 35–169 and 201–331; these read IVEE…RLAP and LGEL…PDER.

As to quaternary structure, homododecamer.

The enzyme catalyses N(6)-(6-phospho-D-fructosyl)-L-lysine + H2O = D-glucose 6-phosphate + L-lysine. Its pathway is carbohydrate metabolism; fructoselysine degradation; D-glucose 6-phosphate and lysine from fructoselysine: step 2/2. Functionally, catalyzes the reversible conversion of fructoselysine 6-phosphate to glucose 6-phosphate and lysine. Functions in a fructoselysine degradation pathway that allows E.coli to grow on fructoselysine or psicoselysine. The chain is Fructoselysine 6-phosphate deglycase (frlB) from Escherichia coli O157:H7.